A 176-amino-acid polypeptide reads, in one-letter code: Cytochrome b561 homolog 1 (176 aa).

Residues M1 to T7 are Cytoplasmic-facing. Residues Q8–L28 traverse the membrane as a helical segment. A heme b-binding site is contributed by H12. Residues R29–T45 lie on the Periplasmic side of the membrane. H46 contributes to the heme b binding site. Residues H46–I63 traverse the membrane as a helical segment. At K64–S85 the chain is on the cytoplasmic side. A helical membrane pass occupies residues L86–M106. Over A107–W141 the chain is Periplasmic. Heme b-binding residues include H138 and H152. The helical transmembrane segment at A142–I162 threads the bilayer. Over Q163–K176 the chain is Cytoplasmic.

Belongs to the cytochrome b561 family. The cofactor is heme b.

It is found in the cell inner membrane. In Escherichia coli (strain K12), this protein is Cytochrome b561 homolog 1 (yodB).